Reading from the N-terminus, the 248-residue chain is B-box zinc finger protein 24 (248 aa).

8 residues coordinate Zn(2+): C5, C8, C28, H33, C57, C60, C80, and H85. Residues 5–47 form a B box-type 1; atypical zinc finger; sequence CDVCEKAPATVICCADEAALCPQCDIEIHAANKLASKHQRLHL. The B box-type 2; atypical zinc finger occupies 57 to 99; sequence CDICQEKAAFIFCVEDRALLCRDCDESIHVANSRSANHQRFLA. Residues 115–148 form a disordered region; the sequence is IEKNQPEPSNNQQKANQIPAKSTSQQQQQPSSAT. Over residues 120–130 the composition is skewed to polar residues; that stretch reads PEPSNNQQKAN. Residues 131 to 148 are compositionally biased toward low complexity; it reads QIPAKSTSQQQQQPSSAT. The Nuclear localization signal signature appears at 226–229; the sequence is KKPR. Positions 236–248 are interaction with COP1; sequence DDDEEHFIVPDLG.

In terms of assembly, interacts with COP1 WD40 domain. Interacts with HY5 and HYH. Interacts with RCD1 and TRP4. COP1-mediated ubiquitination and subsequent proteasomal degradation of BBX24/STO occurs in the dark. High expression in leaves and lower in roots and flowers.

The protein localises to the nucleus. Acts as a negative regulator of seedling photomorphogenesis and light-regulated inhibition of hypocotyl elongation. BBX24/STO and BBX25/STH function as transcriptional corepressors of HY5 activity, leading to the down-regulation of BBX22 expression. BBX24/STO acts additively with BBX25/STH during de-etiolation and the hypocotyl shade avoidance response. Functions as a negative regulator of photomorphogenic UV-B responses by interacting with both COP1 and HY5. May act as a transcription factor in the salt-stress response. This Arabidopsis thaliana (Mouse-ear cress) protein is B-box zinc finger protein 24.